We begin with the raw amino-acid sequence, 210 residues long: Eukaryotic translation initiation factor 2 subunit gamma (210 aa).

The tr-type G domain occupies 1–196 (IGHVAHGKST…HLVETITPPR (196 aa)). The interval 2–9 (GHVAHGKS) is G1. 5–10 (AHGKST) contacts GTP. The segment at 30–34 (NITIK) is G2. The segment at 85 to 88 (DCPG) is G3. GTP contacts are provided by residues 141-144 (NKID) and 174-176 (SAI). The segment at 141–144 (NKID) is G4. The G5 stretch occupies residues 174–176 (SAI).

Belongs to the TRAFAC class translation factor GTPase superfamily. Classic translation factor GTPase family. EIF2G subfamily. Eukaryotic translation initiation factor 2 eIF2 is a heterotrimeric complex composed of an alpha, a beta and a gamma subunit. The factors eIF-1, eIF-2, eIF-3, TIF5/eIF-5 and methionyl-tRNAi form a multifactor complex (MFC) that may bind to the 40S ribosome.

Its subcellular location is the cytoplasm. It localises to the cytosol. It catalyses the reaction GTP + H2O = GDP + phosphate + H(+). Functionally, as a subunit of eukaryotic initiation factor 2 eIF2, involved in the early steps of protein synthesis. In the presence of GTP, eIF-2 forms a ternary complex with initiator tRNA Met-tRNAi and then recruits the 40S ribosomal complex and initiation factors eIF-1, eIF-1A and eIF-3 to form the 43S pre-initiation complex (43S PIC), a step that determines the rate of protein translation. The 43S PIC binds to mRNA and scans downstream to the initiation codon, where it forms a 48S initiation complex by codon-anticodon base pairing. This leads to the displacement of eIF-1 to allow GTPase-activating protein (GAP) eIF-5-mediated hydrolysis of eIF2-bound GTP. Hydrolysis of GTP and release of Pi, which makes GTP hydrolysis irreversible, causes the release of the eIF-2-GDP binary complex from the 40S subunit, an event that is essential for the subsequent joining of the 60S ribosomal subunit to form an elongation-competent 80S ribosome. In order for eIF-2 to recycle and catalyze another round of initiation, the GDP bound to eIF-2 must be exchanged with GTP by way of a reaction catalyzed by GDP-GTP exchange factor (GEF) eIF-2B. The sequence is that of Eukaryotic translation initiation factor 2 subunit gamma from Spironucleus vortens.